Reading from the N-terminus, the 444-residue chain is F-box/FBD/LRR-repeat protein At5g53840 (444 aa).

One can recognise an F-box domain in the interval 17 to 63 (EERLSQLPDHLICVILSHLSTKDAVRTSILSTRWRNLWQLVPVLDFD). LRR repeat units follow at residues 103–123 (YYLT…IDIS), 124–150 (VFTC…KLSR), 151–171 (VTMV…DLDF), 172–197 (VNFT…TIVK), 199–224 (SEDN…RFDR), 226–252 (NGLV…EFIN), 273–299 (NRSM…TIKD), 300–321 (IFHY…LSAV), 322–347 (CSIS…SLKL), 369–396 (VSSL…YFLE), and 398–423 (STIL…HIRQ). The region spanning 356-408 (EEVMSSTVPPPCLVSSLKFVKLESQLLGCGTELKVARYFLENSTILEKLTLKI) is the FBD domain.

This Arabidopsis thaliana (Mouse-ear cress) protein is F-box/FBD/LRR-repeat protein At5g53840.